The sequence spans 93 residues: uncharacterized protein (93 aa).

This is an uncharacterized protein from Methanocaldococcus jannaschii (strain ATCC 43067 / DSM 2661 / JAL-1 / JCM 10045 / NBRC 100440) (Methanococcus jannaschii).